The following is a 111-amino-acid chain: Large ribosomal subunit protein uL22 (111 aa).

Belongs to the universal ribosomal protein uL22 family. In terms of assembly, part of the 50S ribosomal subunit.

This protein binds specifically to 23S rRNA; its binding is stimulated by other ribosomal proteins, e.g. L4, L17, and L20. It is important during the early stages of 50S assembly. It makes multiple contacts with different domains of the 23S rRNA in the assembled 50S subunit and ribosome. In terms of biological role, the globular domain of the protein is located near the polypeptide exit tunnel on the outside of the subunit, while an extended beta-hairpin is found that lines the wall of the exit tunnel in the center of the 70S ribosome. The sequence is that of Large ribosomal subunit protein uL22 from Acidithiobacillus ferrooxidans (strain ATCC 23270 / DSM 14882 / CIP 104768 / NCIMB 8455) (Ferrobacillus ferrooxidans (strain ATCC 23270)).